Here is a 283-residue protein sequence, read N- to C-terminus: NAD kinase (283 aa).

Asp-68 acts as the Proton acceptor in catalysis. Residues 68 to 69 (DG), 142 to 143 (ND), Arg-153, Asp-172, 183 to 188 (TAYSLS), and Gln-242 contribute to the NAD(+) site.

Belongs to the NAD kinase family. It depends on a divalent metal cation as a cofactor.

It is found in the cytoplasm. It catalyses the reaction NAD(+) + ATP = ADP + NADP(+) + H(+). In terms of biological role, involved in the regulation of the intracellular balance of NAD and NADP, and is a key enzyme in the biosynthesis of NADP. Catalyzes specifically the phosphorylation on 2'-hydroxyl of the adenosine moiety of NAD to yield NADP. This is NAD kinase from Caldanaerobacter subterraneus subsp. tengcongensis (strain DSM 15242 / JCM 11007 / NBRC 100824 / MB4) (Thermoanaerobacter tengcongensis).